Reading from the N-terminus, the 321-residue chain is tRNA(Ile)-lysidine synthase (321 aa).

21-26 is a binding site for ATP; the sequence is SYGSDS.

This sequence belongs to the tRNA(Ile)-lysidine synthase family.

The protein localises to the cytoplasm. It carries out the reaction cytidine(34) in tRNA(Ile2) + L-lysine + ATP = lysidine(34) in tRNA(Ile2) + AMP + diphosphate + H(+). Functionally, ligates lysine onto the cytidine present at position 34 of the AUA codon-specific tRNA(Ile) that contains the anticodon CAU, in an ATP-dependent manner. Cytidine is converted to lysidine, thus changing the amino acid specificity of the tRNA from methionine to isoleucine. The chain is tRNA(Ile)-lysidine synthase from Campylobacter jejuni (strain RM1221).